The sequence spans 127 residues: Major sperm protein 78 (127 aa).

Alanine 2 is subject to N-acetylalanine. The MSP domain maps to aspartate 9–asparagine 126.

Sperm.

It localises to the cell projection. It is found in the pseudopodium. Its subcellular location is the cytoplasm. The protein resides in the cytoskeleton. Its function is as follows. Central component in molecular interactions underlying sperm crawling. Forms an extensive filament system that extends from sperm villipoda, along the leading edge of the pseudopod. This is Major sperm protein 78 (msp-78) from Caenorhabditis elegans.